The primary structure comprises 456 residues: MSIGFLRQALNALQQQSRSRTSHRVNQWFKWLSPGLSIKRWLLISVGGVLLAILGLAIWVKLTPIFWLLELVRGFLGAVANILPNYISGPLVILGGLLLLLWGQTRTVGSITQVLRPGAEEELIDVLLAHRRLYRGPKIVVIGGGTGLSTLLRGLKTYSANITAIVTVADDGGSSGRLRQEFGVLPPGDIRNCLAALADEEKLLTELFQYRFRAGDGLTGHSFGNLFLTAMSDITGDLERAVAASSKVLAVRGQVLPATLSDVRLWAELADGRRIEGESSIPKAGGKIVKIGCIPANPPALPAAIKAIKEADYIIIGPGSLYTSLIPNLLVSDIADAIAQSQAPRIYVCNVMTQPGETQGYTVADHIRAIDAACGERQLFDAVLVHKKSPSAQSLIRYAQQDSHPVFLDREAVSQLGRRIVLANVLYEDKTGFVRHNPQKLAKVLLKWYGGAHHGK.

The protein belongs to the gluconeogenesis factor family.

Its subcellular location is the cytoplasm. Functionally, required for morphogenesis under gluconeogenic growth conditions. In Nostoc sp. (strain PCC 7120 / SAG 25.82 / UTEX 2576), this protein is Putative gluconeogenesis factor.